We begin with the raw amino-acid sequence, 1846 residues long: Unconventional myosin-Vb (1846 aa).

In terms of domain architecture, Myosin N-terminal SH3-like spans 8 to 60; the sequence is SRYTRVWIPDPDEVWRSAELTKDYKDGDESLQLRLEDDTILDYPIDVQNNQVP. The requires for interaction with LIMA1 stretch occupies residues 21–40; sequence VWRSAELTKDYKDGDESLQL. One can recognise a Myosin motor domain in the interval 69 to 763; sequence VGENDLTALS…QVAYLEKLRA (695 aa). 163 to 170 lines the ATP pocket; it reads GESGAGKT. Residues 599–629 form a disordered region; that stretch reads VPATNTAKSRSSSKINVRSSRPLMKAPNKEH. The span at 607–619 shows a compositional bias: low complexity; that stretch reads SRSSSKINVRSSR. An actin-binding region spans residues 641–663; sequence LNLLMETLNATTPHYVRCIKPND. IQ domains follow at residues 767–788, 789–813, 814–837, 838–861, 862–884, and 885–914; these read REAT…KYRR, LRAA…EHLR, RTRA…YCRV, RRAA…PPVL, TEHK…HFQR, and QRDA…EARS. Coiled coils occupy residues 915 to 1272 and 1334 to 1450; these read AEHL…ADQR and LKQV…RHHE. The tract at residues 1088–1122 is disordered; the sequence is RDEQQTPGHRKNPSNQSSLESDSNYPSISTSEIGD. Polar residues predominate over residues 1100 to 1120; the sequence is PSNQSSLESDSNYPSISTSEI. Ser-1444 carries the phosphoserine modification. In terms of domain architecture, Dilute spans 1524–1801; that stretch reads SSTINGIKKV…IRTIQAQLQE (278 aa).

The protein belongs to the TRAFAC class myosin-kinesin ATPase superfamily. Myosin family. Component of the CART complex, at least composed of ACTN4, HGS/HRS, MYO5B and TRIM3. Interacts with RAB11FIP2. Interacts with RAB11A and RAB8A. Found in a complex with CFTR and RAB11A. Interacts with NPC1L1. Interacts with LIMA1.

Its subcellular location is the cytoplasm. Functionally, may be involved in vesicular trafficking via its association with the CART complex. The CART complex is necessary for efficient transferrin receptor recycling but not for EGFR degradation. Required in a complex with RAB11A and RAB11FIP2 for the transport of NPC1L1 to the plasma membrane. Together with RAB11A participates in CFTR trafficking to the plasma membrane and TF (transferrin) recycling in nonpolarized cells. Together with RAB11A and RAB8A participates in epithelial cell polarization. Together with RAB25 regulates transcytosis. Required for proper localization of bile salt export pump ABCB11 at the apical/canalicular plasma membrane of hepatocytes. The sequence is that of Unconventional myosin-Vb (Myo5b) from Rattus norvegicus (Rat).